The primary structure comprises 152 residues: Deoxyuridine 5'-triphosphate nucleotidohydrolase (152 aa).

Substrate-binding positions include 71 to 73 (RSG), N84, 88 to 90 (LID), and M98.

It belongs to the dUTPase family. Mg(2+) serves as cofactor.

It catalyses the reaction dUTP + H2O = dUMP + diphosphate + H(+). It functions in the pathway pyrimidine metabolism; dUMP biosynthesis; dUMP from dCTP (dUTP route): step 2/2. Functionally, this enzyme is involved in nucleotide metabolism: it produces dUMP, the immediate precursor of thymidine nucleotides and it decreases the intracellular concentration of dUTP so that uracil cannot be incorporated into DNA. In Serratia proteamaculans (strain 568), this protein is Deoxyuridine 5'-triphosphate nucleotidohydrolase.